Reading from the N-terminus, the 219-residue chain is uncharacterized protein (219 aa).

2 helical membrane passes run 81–101 (VVKW…NYLI) and 168–188 (PIME…TALV).

Its subcellular location is the membrane. This is an uncharacterized protein from Saccharomyces cerevisiae (strain ATCC 204508 / S288c) (Baker's yeast).